The chain runs to 1368 residues: MAP3K epsilon protein kinase 1 (1368 aa).

The Protein kinase domain maps to 20–274; the sequence is YMLGDEIGKG…AKTLLSHPWI (255 aa). HEAT repeat units follow at residues 25–62 and 86–125; these read EIGK…EDLN and SKTK…AVYI. ATP-binding positions include 26-34 and K49; that span reads IGKGAYGRV. The active-site Proton acceptor is D144. The stretch at 218 to 256 is one HEAT 3 repeat; it reads PYYDLQPMPALFRIVQDDNPPIPDSLSPDITDFLRQCFK. Disordered regions lie at residues 296–415 and 430–507; these read EATA…KNTS and QTSH…PVAD. The segment covering 351-364 has biased composition (acidic residues); the sequence is LGEEGTDNSEDDIM. 2 stretches are compositionally biased toward basic and acidic residues: residues 388-399 and 470-486; these read SDFHGKSERGET and SLHD…EGKP. Over residues 488–502 the composition is skewed to polar residues; that stretch reads EASTSMPTSNVNQGD. HEAT repeat units follow at residues 533 to 571, 628 to 653, 654 to 695, 699 to 737, and 750 to 788; these read SNDG…LFPL, IPKS…DFQE, NACL…SSPL, MFIA…VFKL, and AAKN…RVRS. Residues 777 to 883 are disordered; sequence GGLDGQAPRV…ISLSANRTST (107 aa). Residues 791-808 show a composition bias toward polar residues; that stretch reads LDPNNPIFGQNETSSLSM. Composition is skewed to basic and acidic residues over residues 813-826 and 836-852; these read DVLK…EEPS and SDVH…DKPR. HEAT repeat units follow at residues 903–940, 1025–1063, 1067–1105, 1112–1150, 1154–1191, 1196–1234, 1258–1281, 1282–1318, and 1348–1368; these read EQVR…HESR, ATSS…ADTT, YMCS…DPNC, ADAI…INKR, QAAE…ASRN, LRAH…DNRK, RHFV…NKTL, AVNG…HHPR, and QVLV…NTIL.

The protein belongs to the protein kinase superfamily. Ser/Thr protein kinase family. As to quaternary structure, interacts with SGP1. Autophosphorylated. In terms of tissue distribution, expressed in both the sporophytic and the gametophytic tissues, especially in dividing cells. Mostly present in flower buds and mature flowers. Also accumulates in embryos, in roots apices, trichomes and ovule integuments.

The protein localises to the cytoplasm. Its subcellular location is the cytoskeleton. It localises to the microtubule organizing center. It is found in the nucleus. The protein resides in the nucleolus. The protein localises to the cell membrane. It catalyses the reaction L-seryl-[protein] + ATP = O-phospho-L-seryl-[protein] + ADP + H(+). The catalysed reaction is L-threonyl-[protein] + ATP = O-phospho-L-threonyl-[protein] + ADP + H(+). Serine/threonine-protein kinase involved in the spatial and temporal control system organizing cortical activities in mitotic and postmitotic cells. Required for the normal functioning of the plasma membrane in developing pollen. Involved in the regulation of cell expansion, cell elongation, and embryo development. This chain is MAP3K epsilon protein kinase 1, found in Arabidopsis thaliana (Mouse-ear cress).